Consider the following 330-residue polypeptide: WRKY transcription factor WRKY51 (330 aa).

The tract at residues 39–61 (QTGTSERSPAPAPAQEQQQQQQV) is disordered. Residues 51 to 60 (PAQEQQQQQQ) are compositionally biased toward low complexity. Residues 74–81 (FKKVISML) carry the Nuclear localization signal motif. 2 disordered regions span residues 91-117 (RGPV…SAVS) and 302-330 (YEGE…LPLA). The span at 101-117 (PAASEPAPVRSSPSAVS) shows a compositional bias: low complexity. Residues 245-311 (KVADIPADDF…YEGEHRHTPS (67 aa)) constitute a DNA-binding region (WRKY). The span at 318–330 (PPAPPPPLALPLA) shows a compositional bias: pro residues.

The protein belongs to the WRKY group II-a family. As to expression, highly expressed in aleurone cells. In seeds, predominantly present in the plumule, radicle and scutellum of the embryo.

It localises to the nucleus. Its function is as follows. Transcription factor. Interacts, when in complex with WRKY71, specifically with the W box (5'-(T)TGAC[CT]-3'), a frequently occurring elicitor-responsive cis-acting element. Represses specifically gibberellic acid (GA)-induced promoters in aleurone cells, probably by interfering with GAM1. This chain is WRKY transcription factor WRKY51, found in Oryza sativa subsp. indica (Rice).